Consider the following 439-residue polypeptide: Glutamyl-tRNA reductase (439 aa).

Substrate is bound by residues 48–51, serine 107, 112–114, and glutamine 118; these read TCNR and EPQ. Residue cysteine 49 is the Nucleophile of the active site. 187–192 provides a ligand contact to NADP(+); that stretch reads GAGEMA.

The protein belongs to the glutamyl-tRNA reductase family. As to quaternary structure, homodimer.

The catalysed reaction is (S)-4-amino-5-oxopentanoate + tRNA(Glu) + NADP(+) = L-glutamyl-tRNA(Glu) + NADPH + H(+). Its pathway is porphyrin-containing compound metabolism; protoporphyrin-IX biosynthesis; 5-aminolevulinate from L-glutamyl-tRNA(Glu): step 1/2. Its function is as follows. Catalyzes the NADPH-dependent reduction of glutamyl-tRNA(Glu) to glutamate 1-semialdehyde (GSA). In Maridesulfovibrio salexigens (strain ATCC 14822 / DSM 2638 / NCIMB 8403 / VKM B-1763) (Desulfovibrio salexigens), this protein is Glutamyl-tRNA reductase.